Here is a 159-residue protein sequence, read N- to C-terminus: Endoribonuclease YbeY (159 aa).

Zn(2+) contacts are provided by H114, H118, and H124.

The protein belongs to the endoribonuclease YbeY family. Zn(2+) is required as a cofactor.

The protein localises to the cytoplasm. Its function is as follows. Single strand-specific metallo-endoribonuclease involved in late-stage 70S ribosome quality control and in maturation of the 3' terminus of the 16S rRNA. The protein is Endoribonuclease YbeY of Pectobacterium atrosepticum (strain SCRI 1043 / ATCC BAA-672) (Erwinia carotovora subsp. atroseptica).